The chain runs to 524 residues: Ribonuclease Y (524 aa).

The chain crosses the membrane as a helical span at residues 3 to 23; it reads IVINLLLLVLAALVAFVAGFF. A KH domain is found at 214 to 280; sequence ALSVVHIQSD…KLTLKKLLAD (67 aa). Residues 340-432 enclose the HD domain; that stretch reads LLQHSREVAM…VDAANTISLS (93 aa).

This sequence belongs to the RNase Y family.

It is found in the cell membrane. Endoribonuclease that initiates mRNA decay. This is Ribonuclease Y from Chlorobium chlorochromatii (strain CaD3).